Consider the following 358-residue polypeptide: UDP-N-acetylglucosamine--N-acetylmuramyl-(pentapeptide) pyrophosphoryl-undecaprenol N-acetylglucosamine transferase (358 aa).

Residues 11 to 13 (TGG), Asn122, Arg161, Ser189, Ile243, 262 to 267 (ALTVCE), and Gln288 each bind UDP-N-acetyl-alpha-D-glucosamine.

The protein belongs to the glycosyltransferase 28 family. MurG subfamily.

The protein localises to the cell inner membrane. It carries out the reaction di-trans,octa-cis-undecaprenyl diphospho-N-acetyl-alpha-D-muramoyl-L-alanyl-D-glutamyl-meso-2,6-diaminopimeloyl-D-alanyl-D-alanine + UDP-N-acetyl-alpha-D-glucosamine = di-trans,octa-cis-undecaprenyl diphospho-[N-acetyl-alpha-D-glucosaminyl-(1-&gt;4)]-N-acetyl-alpha-D-muramoyl-L-alanyl-D-glutamyl-meso-2,6-diaminopimeloyl-D-alanyl-D-alanine + UDP + H(+). It participates in cell wall biogenesis; peptidoglycan biosynthesis. Cell wall formation. Catalyzes the transfer of a GlcNAc subunit on undecaprenyl-pyrophosphoryl-MurNAc-pentapeptide (lipid intermediate I) to form undecaprenyl-pyrophosphoryl-MurNAc-(pentapeptide)GlcNAc (lipid intermediate II). This is UDP-N-acetylglucosamine--N-acetylmuramyl-(pentapeptide) pyrophosphoryl-undecaprenol N-acetylglucosamine transferase from Coxiella burnetii (strain Dugway 5J108-111).